A 374-amino-acid polypeptide reads, in one-letter code: Peptidoglycan recognition protein 4 (374 aa).

The N-terminal stretch at 1-20 (MLSWLLVFSILVLLAQGVSS) is a signal peptide. N-linked (GlcNAc...) asparagine glycosylation is found at Asn-39, Asn-93, and Asn-146. N-acetylmuramoyl-L-alanine amidase domains are found at residues 76–212 (RPVD…KACP) and 233–359 (PAKY…LSPG). Intrachain disulfides connect Cys-211-Cys-333, Cys-227-Cys-271, and Cys-247-Cys-253. Residue Tyr-275 coordinates peptidoglycan. Interaction with murein regions lie at residues 294 to 303 (QGSKTDSYND) and 354 to 355 (NT).

This sequence belongs to the N-acetylmuramoyl-L-alanine amidase 2 family. In terms of assembly, homodimer; disulfide-linked. Heterodimer with PGLYRP3; disulfide-linked. As to expression, ubiquitous.

It localises to the secreted. Pattern receptor that binds to murein peptidoglycans (PGN) of Gram-positive bacteria. Has bactericidal activity towards Gram-positive bacteria. May kill Gram-positive bacteria by interfering with peptidoglycan biosynthesis. Also binds to Gram-negative bacteria, and has bacteriostatic activity towards Gram-negative bacteria. Plays a role in innate immunity. The chain is Peptidoglycan recognition protein 4 (Pglyrp4) from Mus musculus (Mouse).